A 154-amino-acid chain; its full sequence is Peptide methionine sulfoxide reductase MsrB (154 aa).

The 123-residue stretch at 28 to 150 (DQQWREQLSE…NSVSLIFNKI (123 aa)) folds into the MsrB domain. Residues cysteine 67, cysteine 70, cysteine 116, and cysteine 119 each coordinate Zn(2+). Cysteine 139 functions as the Nucleophile in the catalytic mechanism.

This sequence belongs to the MsrB Met sulfoxide reductase family. Zn(2+) is required as a cofactor.

The catalysed reaction is L-methionyl-[protein] + [thioredoxin]-disulfide + H2O = L-methionyl-(R)-S-oxide-[protein] + [thioredoxin]-dithiol. This Vibrio vulnificus (strain YJ016) protein is Peptide methionine sulfoxide reductase MsrB.